Here is a 154-residue protein sequence, read N- to C-terminus: Large ribosomal subunit protein uL22 (154 aa).

It belongs to the universal ribosomal protein uL22 family. Part of the 50S ribosomal subunit.

In terms of biological role, this protein binds specifically to 23S rRNA. It makes multiple contacts with different domains of the 23S rRNA in the assembled 50S subunit and ribosome. The globular domain of the protein is located near the polypeptide exit tunnel on the outside of the subunit, while an extended beta-hairpin is found that lines the wall of the exit tunnel in the center of the 70S ribosome. The chain is Large ribosomal subunit protein uL22 from Methanoregula boonei (strain DSM 21154 / JCM 14090 / 6A8).